We begin with the raw amino-acid sequence, 185 residues long: Elongation factor P (185 aa).

It belongs to the elongation factor P family.

It localises to the cytoplasm. It participates in protein biosynthesis; polypeptide chain elongation. Functionally, involved in peptide bond synthesis. Stimulates efficient translation and peptide-bond synthesis on native or reconstituted 70S ribosomes in vitro. Probably functions indirectly by altering the affinity of the ribosome for aminoacyl-tRNA, thus increasing their reactivity as acceptors for peptidyl transferase. The polypeptide is Elongation factor P (Thermotoga petrophila (strain ATCC BAA-488 / DSM 13995 / JCM 10881 / RKU-1)).